Consider the following 442-residue polypeptide: UPF0597 protein HRM2_02820 (442 aa).

It belongs to the UPF0597 family.

This is UPF0597 protein HRM2_02820 from Desulforapulum autotrophicum (strain ATCC 43914 / DSM 3382 / VKM B-1955 / HRM2) (Desulfobacterium autotrophicum).